We begin with the raw amino-acid sequence, 654 residues long: Bifunctional polymyxin resistance protein ArnA (654 aa).

Residues 1-303 (MKVIVFAYHE…NISRIKGKKL (303 aa)) are formyltransferase ArnAFT. H105 (proton donor; for formyltransferase activity) is an active-site residue. 137–141 (TKKID) lines the (6R)-10-formyltetrahydrofolate pocket. The interval 313–654 (NLKKILILGV…INFFINNNTS (342 aa)) is dehydrogenase ArnADH. NAD(+) contacts are provided by residues D346 and 367–368 (DI). Residues A392, Y397, and 431–432 (TS) contribute to the UDP-alpha-D-glucuronate site. E433 acts as the Proton acceptor; for decarboxylase activity in catalysis. Residues R459, N491, 532–534 (QKR), and Y612 contribute to the UDP-alpha-D-glucuronate site. R618 (proton donor; for decarboxylase activity) is an active-site residue.

The protein in the N-terminal section; belongs to the Fmt family. UDP-L-Ara4N formyltransferase subfamily. In the C-terminal section; belongs to the NAD(P)-dependent epimerase/dehydratase family. UDP-glucuronic acid decarboxylase subfamily. As to quaternary structure, homohexamer, formed by a dimer of trimers.

The enzyme catalyses UDP-alpha-D-glucuronate + NAD(+) = UDP-beta-L-threo-pentopyranos-4-ulose + CO2 + NADH. It carries out the reaction UDP-4-amino-4-deoxy-beta-L-arabinose + (6R)-10-formyltetrahydrofolate = UDP-4-deoxy-4-formamido-beta-L-arabinose + (6S)-5,6,7,8-tetrahydrofolate + H(+). It functions in the pathway nucleotide-sugar biosynthesis; UDP-4-deoxy-4-formamido-beta-L-arabinose biosynthesis; UDP-4-deoxy-4-formamido-beta-L-arabinose from UDP-alpha-D-glucuronate: step 1/3. The protein operates within nucleotide-sugar biosynthesis; UDP-4-deoxy-4-formamido-beta-L-arabinose biosynthesis; UDP-4-deoxy-4-formamido-beta-L-arabinose from UDP-alpha-D-glucuronate: step 3/3. Its pathway is bacterial outer membrane biogenesis; lipopolysaccharide biosynthesis. Functionally, bifunctional enzyme that catalyzes the oxidative decarboxylation of UDP-glucuronic acid (UDP-GlcUA) to UDP-4-keto-arabinose (UDP-Ara4O) and the addition of a formyl group to UDP-4-amino-4-deoxy-L-arabinose (UDP-L-Ara4N) to form UDP-L-4-formamido-arabinose (UDP-L-Ara4FN). The modified arabinose is attached to lipid A and is required for resistance to polymyxin and cationic antimicrobial peptides. The sequence is that of Bifunctional polymyxin resistance protein ArnA from Wigglesworthia glossinidia brevipalpis.